The sequence spans 103 residues: uncharacterized protein (103 aa).

This is an uncharacterized protein from Pseudescherichia vulneris (Escherichia vulneris).